The primary structure comprises 240 residues: 4-hydroxy-tetrahydrodipicolinate reductase (240 aa).

NAD(+) contacts are provided by residues 79–81 (ATT) and 103–106 (SANM). Histidine 135 functions as the Proton donor/acceptor in the catalytic mechanism. Histidine 136 contacts (S)-2,3,4,5-tetrahydrodipicolinate. Lysine 139 functions as the Proton donor in the catalytic mechanism. (S)-2,3,4,5-tetrahydrodipicolinate is bound at residue 145 to 146 (GT).

This sequence belongs to the DapB family.

It is found in the cytoplasm. The enzyme catalyses (S)-2,3,4,5-tetrahydrodipicolinate + NAD(+) + H2O = (2S,4S)-4-hydroxy-2,3,4,5-tetrahydrodipicolinate + NADH + H(+). It catalyses the reaction (S)-2,3,4,5-tetrahydrodipicolinate + NADP(+) + H2O = (2S,4S)-4-hydroxy-2,3,4,5-tetrahydrodipicolinate + NADPH + H(+). Its pathway is amino-acid biosynthesis; L-lysine biosynthesis via DAP pathway; (S)-tetrahydrodipicolinate from L-aspartate: step 4/4. Catalyzes the conversion of 4-hydroxy-tetrahydrodipicolinate (HTPA) to tetrahydrodipicolinate. The protein is 4-hydroxy-tetrahydrodipicolinate reductase of Staphylococcus aureus (strain bovine RF122 / ET3-1).